Reading from the N-terminus, the 173-residue chain is Shikimate kinase 1 (173 aa).

Glycine 14–threonine 19 is a binding site for ATP. Residue serine 18 coordinates Mg(2+). Residues aspartate 36, arginine 60, and glycine 82 each contribute to the substrate site. Arginine 120 is a binding site for ATP. Arginine 140 contributes to the substrate binding site. Glutamine 157 contributes to the ATP binding site.

This sequence belongs to the shikimate kinase family. In terms of assembly, monomer. Mg(2+) is required as a cofactor.

The protein resides in the cytoplasm. It carries out the reaction shikimate + ATP = 3-phosphoshikimate + ADP + H(+). It functions in the pathway metabolic intermediate biosynthesis; chorismate biosynthesis; chorismate from D-erythrose 4-phosphate and phosphoenolpyruvate: step 5/7. Its function is as follows. Catalyzes the specific phosphorylation of the 3-hydroxyl group of shikimic acid using ATP as a cosubstrate. This Salmonella typhimurium (strain LT2 / SGSC1412 / ATCC 700720) protein is Shikimate kinase 1.